A 102-amino-acid chain; its full sequence is Small ribosomal subunit protein uS10 (102 aa).

The protein belongs to the universal ribosomal protein uS10 family. As to quaternary structure, part of the 30S ribosomal subunit.

In terms of biological role, involved in the binding of tRNA to the ribosomes. This chain is Small ribosomal subunit protein uS10, found in Coprothermobacter proteolyticus (strain ATCC 35245 / DSM 5265 / OCM 4 / BT).